Reading from the N-terminus, the 176-residue chain is Probable non-specific lipid-transfer protein 1 (176 aa).

An N-terminal signal peptide occupies residues 1–37 (MRTVSAPSAVALVVIVAAGLAWTSLASVAPPAPAPGS). Intrachain disulfides connect Cys-41/Cys-89, Cys-51/Cys-66, Cys-67/Cys-112, and Cys-87/Cys-128. Residues 139 to 176 (QLPVSLRHGPVTGPSDPAHKARLERPQIRVPPPAPEKA) form a disordered region. The span at 155 to 165 (PAHKARLERPQ) shows a compositional bias: basic and acidic residues. A compositionally biased stretch (pro residues) spans 167 to 176 (RVPPPAPEKA).

This sequence belongs to the plant LTP family.

In terms of biological role, plant non-specific lipid-transfer proteins transfer phospholipids as well as galactolipids across membranes. May play a role in wax or cutin deposition in the cell walls of expanding epidermal cells and certain secretory tissues. This Parietaria judaica (Pellitory-of-the-wall) protein is Probable non-specific lipid-transfer protein 1.